The chain runs to 156 residues: Phosphopantetheine adenylyltransferase (156 aa).

Thr-10 contacts substrate. ATP-binding positions include 10–11 and His-18; that span reads TF. Substrate-binding residues include Lys-42, Leu-74, and Arg-88. Residues 89-91, Glu-99, and 124-130 contribute to the ATP site; these read GLR and NAFISSS.

It belongs to the bacterial CoaD family. Homohexamer. It depends on Mg(2+) as a cofactor.

It is found in the cytoplasm. It carries out the reaction (R)-4'-phosphopantetheine + ATP + H(+) = 3'-dephospho-CoA + diphosphate. It participates in cofactor biosynthesis; coenzyme A biosynthesis; CoA from (R)-pantothenate: step 4/5. Functionally, reversibly transfers an adenylyl group from ATP to 4'-phosphopantetheine, yielding dephospho-CoA (dPCoA) and pyrophosphate. In Campylobacter concisus (strain 13826), this protein is Phosphopantetheine adenylyltransferase.